A 576-amino-acid polypeptide reads, in one-letter code: Proline--tRNA ligase (576 aa).

This sequence belongs to the class-II aminoacyl-tRNA synthetase family. ProS type 1 subfamily. Homodimer.

It localises to the cytoplasm. It catalyses the reaction tRNA(Pro) + L-proline + ATP = L-prolyl-tRNA(Pro) + AMP + diphosphate. In terms of biological role, catalyzes the attachment of proline to tRNA(Pro) in a two-step reaction: proline is first activated by ATP to form Pro-AMP and then transferred to the acceptor end of tRNA(Pro). As ProRS can inadvertently accommodate and process non-cognate amino acids such as alanine and cysteine, to avoid such errors it has two additional distinct editing activities against alanine. One activity is designated as 'pretransfer' editing and involves the tRNA(Pro)-independent hydrolysis of activated Ala-AMP. The other activity is designated 'posttransfer' editing and involves deacylation of mischarged Ala-tRNA(Pro). The misacylated Cys-tRNA(Pro) is not edited by ProRS. The protein is Proline--tRNA ligase of Bordetella bronchiseptica (strain ATCC BAA-588 / NCTC 13252 / RB50) (Alcaligenes bronchisepticus).